The chain runs to 247 residues: DNA polymerase sliding clamp (247 aa).

It belongs to the PCNA family. In terms of assembly, homotrimer. The subunits circularize to form a toroid; DNA passes through its center. Replication factor C (RFC) is required to load the toroid on the DNA.

Functionally, sliding clamp subunit that acts as a moving platform for DNA processing. Responsible for tethering the catalytic subunit of DNA polymerase and other proteins to DNA during high-speed replication. The polypeptide is DNA polymerase sliding clamp (Thermofilum pendens (strain DSM 2475 / Hrk 5)).